Consider the following 351-residue polypeptide: MRKIIHVDMDCFFAAVEMRDNPALRDIPIAIGGSRERRGVISTANYPARKFGVRSAMPTGMALKLCPHLTLLPGRFDAYKEASNHIREIFSRYTSRIEPLSLDEAYLDVTDSVHCHGSATLIAQEIRQTIFSELQLTASAGVAPVKFLAKIASDMNKPNGQFVITPAEVPAFLQTLPLAKIPGVGKVSAAKLEAMGLRTCGDVQKCDLVILLKRFGKFGRILWERSQGIDERDVNSERLRKSVGVERTMAEDIHHWSECEAIIERLYPELERRLAKVKPDLLIARQGVKLKFDDFQQTTQEHVWPRLNKADLIATARKTWDERRGGRGVRLVGLHVTLLDPQMERQLVLGL.

A UmuC domain is found at 4–185; the sequence is IIHVDMDCFF…LPLAKIPGVG (182 aa). Mg(2+) contacts are provided by Asp-8 and Asp-103. Glu-104 is an active-site residue.

Belongs to the DNA polymerase type-Y family. Monomer. The cofactor is Mg(2+).

Its subcellular location is the cytoplasm. The enzyme catalyses DNA(n) + a 2'-deoxyribonucleoside 5'-triphosphate = DNA(n+1) + diphosphate. Poorly processive, error-prone DNA polymerase involved in untargeted mutagenesis. Copies undamaged DNA at stalled replication forks, which arise in vivo from mismatched or misaligned primer ends. These misaligned primers can be extended by PolIV. Exhibits no 3'-5' exonuclease (proofreading) activity. May be involved in translesional synthesis, in conjunction with the beta clamp from PolIII. The chain is DNA polymerase IV from Escherichia coli O9:H4 (strain HS).